The chain runs to 506 residues: Glutamyl-tRNA(Gln) amidotransferase subunit A, mitochondrial (506 aa).

Active-site charge relay system residues include Lys62 and Ser141. The Acyl-ester intermediate role is filled by Ser165.

This sequence belongs to the amidase family. GatA subfamily. In terms of assembly, subunit of the heterotrimeric GatCAB amidotransferase (AdT) complex, composed of A, B and C subunits.

The protein resides in the mitochondrion. The catalysed reaction is L-glutamyl-tRNA(Gln) + L-glutamine + ATP + H2O = L-glutaminyl-tRNA(Gln) + L-glutamate + ADP + phosphate + H(+). In terms of biological role, allows the formation of correctly charged Gln-tRNA(Gln) through the transamidation of misacylated Glu-tRNA(Gln) in the mitochondria. The reaction takes place in the presence of glutamine and ATP through an activated gamma-phospho-Glu-tRNA(Gln). This Emericella nidulans (strain FGSC A4 / ATCC 38163 / CBS 112.46 / NRRL 194 / M139) (Aspergillus nidulans) protein is Glutamyl-tRNA(Gln) amidotransferase subunit A, mitochondrial.